A 125-amino-acid polypeptide reads, in one-letter code: Small ribosomal subunit protein uS12 (125 aa).

The tract at residues 9–31 (RQGREVEKIKSKSPAMENSPQRR) is disordered. D89 bears the 3-methylthioaspartic acid mark.

Belongs to the universal ribosomal protein uS12 family. In terms of assembly, part of the 30S ribosomal subunit. Contacts proteins S8 and S17. May interact with IF1 in the 30S initiation complex.

Its function is as follows. With S4 and S5 plays an important role in translational accuracy. Functionally, interacts with and stabilizes bases of the 16S rRNA that are involved in tRNA selection in the A site and with the mRNA backbone. Located at the interface of the 30S and 50S subunits, it traverses the body of the 30S subunit contacting proteins on the other side and probably holding the rRNA structure together. The combined cluster of proteins S8, S12 and S17 appears to hold together the shoulder and platform of the 30S subunit. The polypeptide is Small ribosomal subunit protein uS12 (Verminephrobacter eiseniae (strain EF01-2)).